A 215-amino-acid chain; its full sequence is Extracellular small neutral protease (215 aa).

The N-terminal stretch at 1-30 (MRMTRAASALAGLGLAVAAALGSVAPASAA) is a signal peptide. Threonine 152 serves as a coordination point for Ca(2+). Histidine 157 contacts Zn(2+). Residue glutamate 158 is part of the active site. Residues histidine 161 and aspartate 167 each contribute to the Zn(2+) site. Cysteine 173 and cysteine 186 are oxidised to a cystine.

The protein belongs to the peptidase M7 family. It depends on Zn(2+) as a cofactor.

Its subcellular location is the secreted. It catalyses the reaction Hydrolyzes proteins with a preference for Tyr or Phe in the P1' position. Has no action on amino-acid p-nitroanilides.. This chain is Extracellular small neutral protease (snpA), found in Streptomyces coelicolor.